The primary structure comprises 435 residues: 5-hydroxybenzimidazole synthase (435 aa).

Substrate is bound by residues methionine 95, tyrosine 124, histidine 163, 186-188 (SKG), 227-230 (NGLR), and glutamate 266. Residue histidine 270 participates in Zn(2+) binding. Tyrosine 293 contacts substrate. Residue histidine 334 participates in Zn(2+) binding. [4Fe-4S] cluster-binding residues include cysteine 410, cysteine 413, and cysteine 417.

Belongs to the ThiC family. 5-hydroxybenzimidazole synthase subfamily. As to quaternary structure, homodimer. Requires [4Fe-4S] cluster as cofactor.

It catalyses the reaction 5-amino-1-(5-phospho-beta-D-ribosyl)imidazole + AH2 + S-adenosyl-L-methionine = 5-hydroxybenzimidazole + 5'-deoxyadenosine + formate + L-methionine + A + NH4(+) + phosphate + 2 H(+). Catalyzes the conversion of aminoimidazole ribotide (AIR) to 5-hydroxybenzimidazole (5-HBI) in a radical S-adenosyl-L-methionine (SAM)-dependent reaction. Is thus involved in the anaerobic biosynthesis of the benzimidazole lower axial ligand of the cobamide produced by G.sulfurreducens. The chain is 5-hydroxybenzimidazole synthase from Geobacter sulfurreducens (strain ATCC 51573 / DSM 12127 / PCA).